The primary structure comprises 488 residues: Cysteine--tRNA ligase (488 aa).

Residue Cys-40 participates in Zn(2+) binding. The short motif at 42-52 (MTVYDYCHIGH) is the 'HIGH' region element. Zn(2+) is bound by residues Cys-221, His-246, and Glu-250. The 'KMSKS' region signature appears at 278-282 (KMSKS). Lys-281 contacts ATP.

Belongs to the class-I aminoacyl-tRNA synthetase family. Monomer. Requires Zn(2+) as cofactor.

The protein resides in the cytoplasm. It carries out the reaction tRNA(Cys) + L-cysteine + ATP = L-cysteinyl-tRNA(Cys) + AMP + diphosphate. In Psychrobacter cryohalolentis (strain ATCC BAA-1226 / DSM 17306 / VKM B-2378 / K5), this protein is Cysteine--tRNA ligase.